Reading from the N-terminus, the 428-residue chain is tRNA(Ile)-lysidine synthase (428 aa).

Residue 28 to 33 (SGGVDS) participates in ATP binding.

The protein belongs to the tRNA(Ile)-lysidine synthase family.

It is found in the cytoplasm. It carries out the reaction cytidine(34) in tRNA(Ile2) + L-lysine + ATP = lysidine(34) in tRNA(Ile2) + AMP + diphosphate + H(+). Ligates lysine onto the cytidine present at position 34 of the AUA codon-specific tRNA(Ile) that contains the anticodon CAU, in an ATP-dependent manner. Cytidine is converted to lysidine, thus changing the amino acid specificity of the tRNA from methionine to isoleucine. This is tRNA(Ile)-lysidine synthase from Streptococcus pyogenes serotype M1.